The primary structure comprises 96 residues: Co-chaperonin GroES (96 aa).

It belongs to the GroES chaperonin family. As to quaternary structure, heptamer of 7 subunits arranged in a ring. Interacts with the chaperonin GroEL.

The protein resides in the cytoplasm. Together with the chaperonin GroEL, plays an essential role in assisting protein folding. The GroEL-GroES system forms a nano-cage that allows encapsulation of the non-native substrate proteins and provides a physical environment optimized to promote and accelerate protein folding. GroES binds to the apical surface of the GroEL ring, thereby capping the opening of the GroEL channel. The protein is Co-chaperonin GroES of Thioalkalivibrio sulfidiphilus (strain HL-EbGR7).